The following is a 204-amino-acid chain: Ras-related protein RabQ (204 aa).

12–19 (GPPFVGKS) is a GTP binding site. An Effector region motif is present at residues 34–42 (MDTTIGVEF). Residues 60-64 (DTAGQ) and 118-121 (NKCD) contribute to the GTP site. Residues Cys202 and Cys203 are each lipidated (S-geranylgeranyl cysteine).

Belongs to the small GTPase superfamily. Rab family.

It is found in the cell membrane. The sequence is that of Ras-related protein RabQ (rabQ) from Dictyostelium discoideum (Social amoeba).